The chain runs to 248 residues: Ubiquinone/menaquinone biosynthesis C-methyltransferase UbiE (248 aa).

Residues serine 68 and aspartate 92 each contribute to the S-adenosyl-L-methionine site.

The protein belongs to the class I-like SAM-binding methyltransferase superfamily. MenG/UbiE family.

It catalyses the reaction a 2-demethylmenaquinol + S-adenosyl-L-methionine = a menaquinol + S-adenosyl-L-homocysteine + H(+). The catalysed reaction is a 2-methoxy-6-(all-trans-polyprenyl)benzene-1,4-diol + S-adenosyl-L-methionine = a 5-methoxy-2-methyl-3-(all-trans-polyprenyl)benzene-1,4-diol + S-adenosyl-L-homocysteine + H(+). It participates in quinol/quinone metabolism; menaquinone biosynthesis; menaquinol from 1,4-dihydroxy-2-naphthoate: step 2/2. It functions in the pathway cofactor biosynthesis; ubiquinone biosynthesis. Its function is as follows. Methyltransferase required for the conversion of demethylmenaquinol (DMKH2) to menaquinol (MKH2) and the conversion of 2-polyprenyl-6-methoxy-1,4-benzoquinol (DDMQH2) to 2-polyprenyl-3-methyl-6-methoxy-1,4-benzoquinol (DMQH2). The polypeptide is Ubiquinone/menaquinone biosynthesis C-methyltransferase UbiE (Rickettsia bellii (strain RML369-C)).